The sequence spans 284 residues: Probable endonuclease 4 (284 aa).

9 residues coordinate Zn(2+): histidine 69, histidine 109, glutamate 145, aspartate 179, histidine 182, histidine 216, aspartate 229, histidine 231, and glutamate 261.

This sequence belongs to the AP endonuclease 2 family. Zn(2+) is required as a cofactor.

The catalysed reaction is Endonucleolytic cleavage to 5'-phosphooligonucleotide end-products.. Its function is as follows. Endonuclease IV plays a role in DNA repair. It cleaves phosphodiester bonds at apurinic or apyrimidinic (AP) sites, generating a 3'-hydroxyl group and a 5'-terminal sugar phosphate. The chain is Probable endonuclease 4 from Chlorobium phaeobacteroides (strain BS1).